The chain runs to 103 residues: Large ribosomal subunit protein uL24 (103 aa).

Residues 70–103 (YLDPSTNEPTRLGVRREDGKRVRYAKKSGKDLEN) are disordered.

The protein belongs to the universal ribosomal protein uL24 family. As to quaternary structure, part of the 50S ribosomal subunit.

Functionally, one of two assembly initiator proteins, it binds directly to the 5'-end of the 23S rRNA, where it nucleates assembly of the 50S subunit. Its function is as follows. One of the proteins that surrounds the polypeptide exit tunnel on the outside of the subunit. This Lactiplantibacillus plantarum (strain ATCC BAA-793 / NCIMB 8826 / WCFS1) (Lactobacillus plantarum) protein is Large ribosomal subunit protein uL24.